The chain runs to 239 residues: 4-hydroxy-tetrahydrodipicolinate reductase (239 aa).

NAD(+) is bound by residues 8–13 (GSTGKM), 78–80 (GTT), and 102–105 (SANM). His134 acts as the Proton donor/acceptor in catalysis. His135 contributes to the (S)-2,3,4,5-tetrahydrodipicolinate binding site. Residue Lys138 is the Proton donor of the active site. (S)-2,3,4,5-tetrahydrodipicolinate is bound at residue 144–145 (GT).

Belongs to the DapB family.

It is found in the cytoplasm. The catalysed reaction is (S)-2,3,4,5-tetrahydrodipicolinate + NAD(+) + H2O = (2S,4S)-4-hydroxy-2,3,4,5-tetrahydrodipicolinate + NADH + H(+). It catalyses the reaction (S)-2,3,4,5-tetrahydrodipicolinate + NADP(+) + H2O = (2S,4S)-4-hydroxy-2,3,4,5-tetrahydrodipicolinate + NADPH + H(+). It participates in amino-acid biosynthesis; L-lysine biosynthesis via DAP pathway; (S)-tetrahydrodipicolinate from L-aspartate: step 4/4. In terms of biological role, catalyzes the conversion of 4-hydroxy-tetrahydrodipicolinate (HTPA) to tetrahydrodipicolinate. The chain is 4-hydroxy-tetrahydrodipicolinate reductase from Rickettsia africae (strain ESF-5).